A 385-amino-acid polypeptide reads, in one-letter code: Aliphatic amidase expression-regulating protein (385 aa).

Homodimer. Forms a complex with AmiR.

In terms of biological role, negatively regulates the expression of the aliphatic amidase operon. AmiC functions by inhibiting the action of AmiR at the protein level. It exhibits protein kinase activity. This Pseudomonas aeruginosa (strain ATCC 15692 / DSM 22644 / CIP 104116 / JCM 14847 / LMG 12228 / 1C / PRS 101 / PAO1) protein is Aliphatic amidase expression-regulating protein (amiC).